Consider the following 238-residue polypeptide: Ciliary microtubule associated protein 1B (238 aa).

The STPGR repeat unit spans residues 182–207; sequence PGPCAYHVVNPMIYKTRAPQFTMLGR. The segment at 206-238 is disordered; that stretch reads GRTLPPRENTKKPGPASYSVDKVVWSRGSRGRG.

The protein belongs to the CIMAP family.

The protein localises to the cell projection. It is found in the cilium. Its subcellular location is the flagellum. The polypeptide is Ciliary microtubule associated protein 1B (Cimap1b) (Mus musculus (Mouse)).